A 102-amino-acid polypeptide reads, in one-letter code: MQKARIKLSSTQHVELDGVCDQIKAIAEKTGVDMAGPIPLPTKALKVTTRKSTDGEGSSSFDRWTMRVHKRVIDIEADERTMKHIMKVRIPDTVQIEIELRN.

Belongs to the universal ribosomal protein uS10 family. Part of the 30S ribosomal subunit.

Functionally, involved in the binding of tRNA to the ribosomes. This is Small ribosomal subunit protein uS10 from Methanococcus maripaludis (strain C6 / ATCC BAA-1332).